The primary structure comprises 903 residues: MLIPSKLSRPVRLQNTVVRDRLLVKLSSAANYRLTLINCPAGYGKTTLIAQWAADQSNLGWYSLDESDNQSERFATYLIAAIQLATGGHCSKSEALSQKHQYANLSALFSQLFIELSNWDGPLYLVIDDYHLITNDAIHEAMRFFLRHQPENLTLIILSRTLPSLGIANLRVRDQLLELGMQQLAFNHHEAQQFFECRLSSPLEQGDSSRLCDEVEGWVTALQLIALSSRQPNSSAQKSAKRLAGLNASHLSDYLVDEVLDQVDSKARAFLLRCSVLRSMNDALIVRLTGEDNGQQLLEELERQGLFIHRMDDSAEWFCFHPLFATFLRQRCQWELALELPELHHAAAEGWMALGYPAEAIHHALAAGDVGMLRDILLQHAWSLFHHSELALLEQCLTALPYPLLVQNPELALLQAWLAQSQHRYSEVNTLLEQAELAMQERKIPVDEILRAEFGALRAQVAINAGKPDEAEKLATDALKYLPMAHYYSRIVATSVTGEVHHCKGELARALPMMQQTEQMARRHEAYHYALWALLQQSEILIAQGFLQAAYETQEKAFELIREQHLEQLPMHEFLLRIRSQVLWSWSRLDEAEEAARKGVEILANYQPQQQLQCLAMLAKCSLARGDLDNANVYIQRCEALQHGSQYHLDWITNADKPRVIHWQMTGDKVAAASWLRQTEKPGMADNHFLQGQWRNIARVQIILGRFDEAEVVLDELNENARRLRLTSDLNRNLLLSNTLYWQTERKGEAQKALIESLTLANRTGFISHFVIEGEAMAQQLRQLIQLNALPELEQHRAQRILKDINQHHRHKFAHFDEIFVDKLLTHPQVPELIRTSPLTQREWQVLGLIYSGYSNDQIANELDVAATTIKTHIRNLYQKLGVAHRQEAVQQAQRLLQMMGYV.

39–46 (CPAGYGKT) lines the ATP pocket. The 66-residue stretch at 832–897 (ELIRTSPLTQ…EAVQQAQRLL (66 aa)) folds into the HTH luxR-type domain. Residues 856 to 875 (NDQIANELDVAATTIKTHIR) constitute a DNA-binding region (H-T-H motif).

The protein belongs to the MalT family. As to quaternary structure, monomer in solution. Oligomerizes to an active state in the presence of the positive effectors ATP and maltotriose.

With respect to regulation, activated by ATP and maltotriose, which are both required for DNA binding. Positively regulates the transcription of the maltose regulon whose gene products are responsible for uptake and catabolism of malto-oligosaccharides. Specifically binds to the promoter region of its target genes, recognizing a short DNA motif called the MalT box. The chain is HTH-type transcriptional regulator MalT from Yersinia pseudotuberculosis serotype O:1b (strain IP 31758).